A 377-amino-acid polypeptide reads, in one-letter code: Cilia- and flagella-associated protein 263 (377 aa).

Coiled coils occupy residues 95-243 (LTAD…NQEL) and 280-354 (LRKE…SLKG).

The protein belongs to the CFAP263 family. As to quaternary structure, forms a complex with CFAP184; the interaction is required for functional activity in cilia. Interacts with HAP1 and PCM1.

The protein resides in the cytoplasm. It localises to the cytoskeleton. The protein localises to the microtubule organizing center. It is found in the centrosome. Its subcellular location is the centriolar satellite. The protein resides in the cell projection. It localises to the cilium. Functionally, component of centriolar satellites contributing to primary cilium formation. In complex with CFAP263, acts as a regulator of ciliary beating that connects radial spoke 3 (RS3) to the inner dynein arm (IDA) and the nexin-dynein regulatory complex (N-DRC). The complex is positioned parallel to N-DRC and forms a connection between the arch at the base of RS3, the IDA tail and N-DRC. The protein is Cilia- and flagella-associated protein 263 of Homo sapiens (Human).